We begin with the raw amino-acid sequence, 345 residues long: Uroporphyrinogen decarboxylase (345 aa).

Substrate contacts are provided by residues 27 to 31 (RQAGR), F46, D76, Y152, S207, and H321.

This sequence belongs to the uroporphyrinogen decarboxylase family. In terms of assembly, homodimer.

It is found in the cytoplasm. The enzyme catalyses uroporphyrinogen III + 4 H(+) = coproporphyrinogen III + 4 CO2. It functions in the pathway porphyrin-containing compound metabolism; protoporphyrin-IX biosynthesis; coproporphyrinogen-III from 5-aminolevulinate: step 4/4. Catalyzes the decarboxylation of four acetate groups of uroporphyrinogen-III to yield coproporphyrinogen-III. In Staphylococcus aureus (strain USA300 / TCH1516), this protein is Uroporphyrinogen decarboxylase.